Here is a 490-residue protein sequence, read N- to C-terminus: Hippocampus abundant transcript 1 protein (490 aa).

Residue methionine 1 is modified to N-acetylmethionine. Residues methionine 1–alanine 40 are Extracellular-facing. Asparagine 12 carries an N-linked (GlcNAc...) asparagine glycan. The chain crosses the membrane as a helical span at residues valine 41 to valine 61. The Cytoplasmic segment spans residues leucine 62 to asparagine 74. Residues glycine 75–leucine 95 traverse the membrane as a helical segment. Over serine 96 to serine 103 the chain is Extracellular. Residues phenylalanine 104 to tryptophan 124 form a helical membrane-spanning segment. Topologically, residues tryptophan 125 to tyrosine 126 are cytoplasmic. A helical transmembrane segment spans residues phenylalanine 127–valine 147. Residues alanine 148 to tyrosine 160 are Extracellular-facing. Residues glycine 161 to leucine 181 form a helical membrane-spanning segment. The Cytoplasmic segment spans residues glycine 182 to serine 188. The chain crosses the membrane as a helical span at residues leucine 189–valine 209. At proline 210–aspartate 243 the chain is on the extracellular side. Residues serine 244–tyrosine 264 form a helical membrane-spanning segment. Residues serine 265–alanine 284 are Cytoplasmic-facing. A helical membrane pass occupies residues phenylalanine 285–methionine 305. At arginine 306–threonine 313 the chain is on the extracellular side. A helical transmembrane segment spans residues isoleucine 314–proline 334. The Cytoplasmic segment spans residues tryptophan 335–methionine 337. A helical membrane pass occupies residues tryptophan 338 to valine 358. Over serine 359–glycine 379 the chain is Extracellular. Residues leucine 380–leucine 400 traverse the membrane as a helical segment. The Cytoplasmic segment spans residues lysine 401–proline 427. A helical transmembrane segment spans residues glycine 428 to isoleucine 448. At proline 449–valine 490 the chain is on the extracellular side. Asparagine 453 carries N-linked (GlcNAc...) asparagine glycosylation. The interval glycine 466–valine 490 is disordered.

This sequence belongs to the major facilitator superfamily. In terms of tissue distribution, expressed in various tissues.

The protein localises to the membrane. The polypeptide is Hippocampus abundant transcript 1 protein (Mus musculus (Mouse)).